Consider the following 400-residue polypeptide: MAEAMDLGKDPNGPTHSSTLFVREDGSSMSFYVRPSPAKRRLSTLILHGGGTVCRVQEPGAVLLAQPGEALAEASGDFISTQYILDCVERNERLELEAYRLGSASAADTGSEAKPGALAEGAAEPEPQRLAGRIAFTDADDVAILTYVKENARSPSSVTGNALWKAMEKSSLTQHSWQSLKDRYLKHLRGQEHKYLLGDAPVSPSSQKLKRKAEEDPEAADSGEPQNKRTPDLPEEEYVKEEIQENEEAVKKMLVEATREFEEVVVDESPPDFEIHITMCDDDPPTPEEDSETQPDEEEEEEEEEKVSQPEVGAAIKIIRQLMEKFNLDLSTVTQAFLKNSGELEATSAFLASGQRADGYPIWSRQDDIDLQKDDEDTREALVKKFGAQNVARRIEFRKK.

N-acetylalanine is present on alanine 2. Phosphoserine occurs at positions 36 and 43. The BRCT domain maps to 78-101; that stretch reads FISTQYILDCVERNERLELEAYRL. The interval 105–126 is disordered; it reads SAADTGSEAKPGALAEGAAEPE. The span at 112–125 shows a compositional bias: low complexity; sequence EAKPGALAEGAAEP. Lysine 114 is covalently cross-linked (Glycyl lysine isopeptide (Lys-Gly) (interchain with G-Cter in SUMO2)). The Myb-like domain maps to 128 to 188; that stretch reads QRLAGRIAFT…SLKDRYLKHL (61 aa). Serine 154 and serine 156 each carry phosphoserine. Residue lysine 194 forms a Glycyl lysine isopeptide (Lys-Gly) (interchain with G-Cter in SUMO2) linkage. 2 disordered regions span residues 196–244 and 264–311; these read LLGD…EEIQ and VVVD…SQPE. Residues serine 203 and serine 206 each carry the phosphoserine modification. Residues lysine 208, lysine 212, and lysine 240 each participate in a glycyl lysine isopeptide (Lys-Gly) (interchain with G-Cter in SUMO2) cross-link. Positions 280–305 are enriched in acidic residues; sequence CDDDPPTPEEDSETQPDEEEEEEEEE. A Glycyl lysine isopeptide (Lys-Gly) (interchain with G-Cter in SUMO2) cross-link involves residue lysine 373. The short motif at 384–400 is the Nuclear localization signal element; sequence KKFGAQNVARRIEFRKK.

This sequence belongs to the RAP1 family. In terms of assembly, associates with the I-kappa-B-kinase (IKK) core complex, composed of CHUK, IKBKB and IKBKG. Homodimer. Component of the shelterin complex (telosome) composed of TERF1, TERF2, TINF2, TERF2IP ACD and POT1. Interacts with TERF2 (but not TERF1) with its C-terminus. Interacts with SLX4/BTBD12. Interacts with TERF2; the interaction is direct.

The protein localises to the nucleus. The protein resides in the cytoplasm. Its subcellular location is the chromosome. It localises to the telomere. Functionally, acts both as a regulator of telomere function and as a transcription regulator. Involved in the regulation of telomere length and protection as a component of the shelterin complex (telosome). In contrast to other components of the shelterin complex, it is dispensible for telomere capping and does not participate in the protection of telomeres against non-homologous end-joining (NHEJ)-mediated repair. Instead, it is required to negatively regulate telomere recombination and is essential for repressing homology-directed repair (HDR), which can affect telomere length. Does not bind DNA directly: recruited to telomeric double-stranded 5'-TTAGGG-3' repeats via its interaction with TERF2. Independently of its function in telomeres, also acts as a transcription regulator: recruited to extratelomeric 5'-TTAGGG-3' sites via its association with TERF2 or other factors, and regulates gene expression. When cytoplasmic, associates with the I-kappa-B-kinase (IKK) complex and acts as a regulator of the NF-kappa-B signaling by promoting IKK-mediated phosphorylation of RELA/p65, leading to activate expression of NF-kappa-B target genes. In Macaca fascicularis (Crab-eating macaque), this protein is Telomeric repeat-binding factor 2-interacting protein 1 (TERF2IP).